The sequence spans 64 residues: UPF0370 protein YE1145 (64 aa).

Residues 3–23 traverse the membrane as a helical segment; it reads WLADYWWVVLIILVGMILNGI. A disordered region spans residues 36-64; it reads SNKPEIPPHRDNNAQWDDDDDWPDKDKKK.

The protein belongs to the UPF0370 family.

The protein resides in the cell membrane. The protein is UPF0370 protein YE1145 of Yersinia enterocolitica serotype O:8 / biotype 1B (strain NCTC 13174 / 8081).